Consider the following 469-residue polypeptide: Glutamine synthetase (469 aa).

The GS beta-grasp domain maps to 12 to 97; sequence HDVKWVDLRF…LVCDIIEPST (86 aa). Residues 105-469 form the GS catalytic domain; it reads PRNIAKRAEE…PLEYDLYYSV (365 aa). The Mg(2+) site is built by E130 and E132. Position 208 (E208) interacts with ATP. E213 and E221 together coordinate Mg(2+). Residues 265–266 and G266 contribute to the L-glutamate site; that span reads NG. Mg(2+) is bound at residue H270. ATP-binding positions include 272–274 and S274; that span reads HMS. 3 residues coordinate L-glutamate: R322, E328, and R340. ATP-binding residues include R340, R345, and K353. E358 provides a ligand contact to Mg(2+). Residue R360 participates in L-glutamate binding. Y398 is subject to O-AMP-tyrosine.

It belongs to the glutamine synthetase family. Oligomer of 12 subunits arranged in the form of two hexameric ring. Requires Mg(2+) as cofactor.

The protein localises to the cytoplasm. It carries out the reaction L-glutamate + NH4(+) + ATP = L-glutamine + ADP + phosphate + H(+). Its activity is regulated as follows. The activity of this enzyme could be controlled by adenylation under conditions of abundant glutamine. Its function is as follows. Catalyzes the ATP-dependent biosynthesis of glutamine from glutamate and ammonia. This Pseudomonas aeruginosa (strain ATCC 15692 / DSM 22644 / CIP 104116 / JCM 14847 / LMG 12228 / 1C / PRS 101 / PAO1) protein is Glutamine synthetase.